Reading from the N-terminus, the 477-residue chain is Dihydrolipoyl dehydrogenase (477 aa).

FAD is bound by residues 41–50, Lys-59, Gly-124, and 153–155; these read EKRGALGGTC and TGS. Residues Cys-50 and Cys-55 are joined by a disulfide bond. NAD(+)-binding positions include 190 to 197, Glu-213, Val-248, and Gly-282; that span reads GGGVIGLE. Residues Asp-323 and 330–333 contribute to the FAD site; that span reads MLAH. Residue His-456 is the Proton acceptor of the active site.

The protein belongs to the class-I pyridine nucleotide-disulfide oxidoreductase family. As to quaternary structure, homodimer. Requires FAD as cofactor.

It catalyses the reaction N(6)-[(R)-dihydrolipoyl]-L-lysyl-[protein] + NAD(+) = N(6)-[(R)-lipoyl]-L-lysyl-[protein] + NADH + H(+). This Trypanosoma cruzi protein is Dihydrolipoyl dehydrogenase (LPD).